A 905-amino-acid chain; its full sequence is Protein translocase subunit SecA (905 aa).

ATP contacts are provided by residues Q89, 107–111, and D502; that span reads GEGKT. Residues 837 to 885 are disordered; the sequence is EQTDVGDPILNDQNKKNSSTLWTPSQENKFVNPKDRNPSDSTTWGKVGR. A compositionally biased stretch (polar residues) spans 852–865; it reads KNSSTLWTPSQENK. Zn(2+) is bound by residues C889, C891, C900, and H901.

This sequence belongs to the SecA family. Monomer and homodimer. Part of the essential Sec protein translocation apparatus which comprises SecA, SecYEG and auxiliary proteins SecDF-YajC and YidC. It depends on Zn(2+) as a cofactor.

Its subcellular location is the cell inner membrane. The protein localises to the cytoplasm. It catalyses the reaction ATP + H2O + cellular proteinSide 1 = ADP + phosphate + cellular proteinSide 2.. Part of the Sec protein translocase complex. Interacts with the SecYEG preprotein conducting channel. Has a central role in coupling the hydrolysis of ATP to the transfer of proteins into and across the cell membrane, serving both as a receptor for the preprotein-SecB complex and as an ATP-driven molecular motor driving the stepwise translocation of polypeptide chains across the membrane. The sequence is that of Protein translocase subunit SecA from Bartonella henselae (strain ATCC 49882 / DSM 28221 / CCUG 30454 / Houston 1) (Rochalimaea henselae).